Reading from the N-terminus, the 238-residue chain is Probable transcriptional regulatory protein SpyM51586 (238 aa).

This sequence belongs to the TACO1 family. YeeN subfamily.

The protein resides in the cytoplasm. The polypeptide is Probable transcriptional regulatory protein SpyM51586 (Streptococcus pyogenes serotype M5 (strain Manfredo)).